A 304-amino-acid chain; its full sequence is MNLDTLDRPVKAVVLRPISVRRRIKNNVATMFFFTSFLIALVPLVWLLSVVVARGFYAVTRFDWWTHSLRGVMPEEFAGGVYHALYGSLVQAVVAAIMAVPLGSMTAVYLVEYGSGPFVRVTTFMVDVLAGVPSIVAALFIFCLWIATLGFQQSAFAVSLALVLLMLPVVVRSTEEILRLVPDELREACYALGIPKWKTIVRIVFPIATPGIISGVLLSIARVIGETAPVLVLVGYSRSINFDIFDGNMASLPLLIYTELTNPEYAGFLRVWGAALTLIILVAGINLFGAAFRFLATRRCSGCR.

The next 6 membrane-spanning stretches (helical) occupy residues 32–52 (FFFT…SVVV), 92–112 (AVVA…YLVE), 128–148 (VLAG…WIAT), 151–171 (FQQS…PVVV), 200–220 (IVRI…LLSI), and 272–292 (WGAA…GAAF). Positions 85–289 (LYGSLVQAVV…ILVAGINLFG (205 aa)) constitute an ABC transmembrane type-1 domain.

The protein belongs to the binding-protein-dependent transport system permease family. CysTW subfamily.

The protein localises to the cell membrane. In terms of biological role, part of the binding-protein-dependent transport system for phosphate; probably responsible for the translocation of the substrate across the membrane. The protein is Phosphate transport system permease protein PstA (pstA) of Mycobacterium leprae (strain TN).